Reading from the N-terminus, the 3507-residue chain is Dynein axonemal heavy chain 14 (3507 aa).

Residues 91 to 126 (PHLPGTQDPLRRVRDPTPIVASSPGRRRGSWSGGYG) form a disordered region. The stretch at 354–381 (DEFCEEQLQQATQALKQLEDIRNKAISE) forms a coiled coil. A GPAGTGKT motif motif is present at residues 1164-1171 (GPAGTGKT). ATP contacts are provided by residues 1164–1171 (GPAGTGKT) and 1427–1434 (GPTGGGKT). Residue asparagine 1818 is glycosylated (N-linked (GlcNAc...) asparagine).

This sequence belongs to the dynein heavy chain family. Consists of at least two heavy chains and a number of intermediate and light chains.

The protein localises to the cytoplasm. The protein resides in the cytoskeleton. It localises to the cilium axoneme. Its function is as follows. Force generating protein of respiratory cilia. Produces force towards the minus ends of microtubules. Dynein has ATPase activity; the force-producing power stroke is thought to occur on release of ADP. Involved in sperm motility; implicated in sperm flagellar assembly. In Homo sapiens (Human), this protein is Dynein axonemal heavy chain 14 (DNAH14).